The primary structure comprises 388 residues: Formate-dependent phosphoribosylglycinamide formyltransferase (388 aa).

N(1)-(5-phospho-beta-D-ribosyl)glycinamide contacts are provided by residues 15 to 16 (EL) and E75. ATP-binding positions include R107, K148, 153–158 (SSGKGQ), 188–191 (EEFL), and E196. In terms of domain architecture, ATP-grasp spans 112–302 (DLAAGELALR…EFELHLRAVL (191 aa)). Positions 261 and 273 each coordinate Mg(2+). N(1)-(5-phospho-beta-D-ribosyl)glycinamide-binding positions include D280, K350, and 357-358 (RR).

It belongs to the PurK/PurT family. As to quaternary structure, homodimer.

The catalysed reaction is N(1)-(5-phospho-beta-D-ribosyl)glycinamide + formate + ATP = N(2)-formyl-N(1)-(5-phospho-beta-D-ribosyl)glycinamide + ADP + phosphate + H(+). Its pathway is purine metabolism; IMP biosynthesis via de novo pathway; N(2)-formyl-N(1)-(5-phospho-D-ribosyl)glycinamide from N(1)-(5-phospho-D-ribosyl)glycinamide (formate route): step 1/1. Its function is as follows. Involved in the de novo purine biosynthesis. Catalyzes the transfer of formate to 5-phospho-ribosyl-glycinamide (GAR), producing 5-phospho-ribosyl-N-formylglycinamide (FGAR). Formate is provided by PurU via hydrolysis of 10-formyl-tetrahydrofolate. The protein is Formate-dependent phosphoribosylglycinamide formyltransferase of Parasynechococcus marenigrum (strain WH8102).